A 74-amino-acid chain; its full sequence is Large ribosomal subunit protein bL31 (74 aa).

Belongs to the bacterial ribosomal protein bL31 family. Type A subfamily. Part of the 50S ribosomal subunit.

Binds the 23S rRNA. The sequence is that of Large ribosomal subunit protein bL31 from Phenylobacterium zucineum (strain HLK1).